We begin with the raw amino-acid sequence, 88 residues long: Small ribosomal subunit protein bS16c (88 aa).

The protein belongs to the bacterial ribosomal protein bS16 family.

The protein localises to the plastid. Its subcellular location is the chloroplast. The sequence is that of Small ribosomal subunit protein bS16c from Atropa belladonna (Belladonna).